We begin with the raw amino-acid sequence, 206 residues long: Ribosomal RNA small subunit methyltransferase G (206 aa).

Residues glycine 73, leucine 78, 124 to 125, and arginine 139 contribute to the S-adenosyl-L-methionine site; that span reads VE.

The protein belongs to the methyltransferase superfamily. RNA methyltransferase RsmG family.

The protein localises to the cytoplasm. The enzyme catalyses guanosine(527) in 16S rRNA + S-adenosyl-L-methionine = N(7)-methylguanosine(527) in 16S rRNA + S-adenosyl-L-homocysteine. Specifically methylates the N7 position of guanine in position 527 of 16S rRNA. This chain is Ribosomal RNA small subunit methyltransferase G, found in Photorhabdus laumondii subsp. laumondii (strain DSM 15139 / CIP 105565 / TT01) (Photorhabdus luminescens subsp. laumondii).